Here is a 663-residue protein sequence, read N- to C-terminus: ATP-dependent zinc metalloprotease FtsH (663 aa).

Topologically, residues 1-12 (MNKKETNTSWWR) are stromal. Residues 13–33 (IILISLGISIICILAAFLAMK) form a helical membrane-spanning segment. At 34 to 135 (DGFFVLENNT…HPPKLDIFKT (102 aa)) the chain is on the lumenal side. A helical membrane pass occupies residues 136 to 156 (ISDTLGSLIVPGLVVAVFYLF). Residues 157 to 663 (LERANNNNNN…KIYESKFPKK (507 aa)) are Stromal-facing. Positions 165–184 (NNNSNGSPFGPGGGPNQNMR) are disordered. Residue 244 to 251 (GPPGTGKT) coordinates ATP. His465 contacts Zn(2+). Glu466 is a catalytic residue. Zn(2+) contacts are provided by His469 and Asp543.

In the central section; belongs to the AAA ATPase family. This sequence in the C-terminal section; belongs to the peptidase M41 family. In terms of assembly, homohexamer. The cofactor is Zn(2+).

The protein localises to the plastid. It is found in the chloroplast thylakoid membrane. In terms of biological role, acts as a processive, ATP-dependent zinc metallopeptidase. The chain is ATP-dependent zinc metalloprotease FtsH from Heterosigma akashiwo (strain NIES-293 / 8280G21-1).